Reading from the N-terminus, the 336-residue chain is 3-hydroxyisobutyrate dehydrogenase, mitochondrial (336 aa).

The transit peptide at 1–36 directs the protein to the mitochondrion; that stretch reads MAASLRLLGAASGLRYWSRRLRPAAGSFAAVCSRSV. 40-68 serves as a coordination point for NAD(+); that stretch reads TPVGFIGLGNMGNPMAKNLMKHGYPLIIY. N6-acetyllysine; alternate is present on residues K60 and K76. K60 and K76 each carry N6-succinyllysine; alternate. K95 carries the N6-succinyllysine modification. NAD(+)-binding positions include 103-104 and N108; that span reads LP. The residue at position 121 (K121) is an N6-acetyllysine. T134 is an NAD(+) binding site. An N6-succinyllysine modification is found at K141. K145 is subject to N6-acetyllysine. Position 149 is an N6-acetyllysine; alternate (K149). An N6-succinyllysine; alternate modification is found at K149. K209 is a catalytic residue. 2 positions are modified to N6-acetyllysine; alternate: K238 and K242. N6-succinyllysine; alternate is present on residues K238 and K242. An NAD(+)-binding site is contributed by K284. K297 carries the post-translational modification N6-succinyllysine. K321 is modified (N6-acetyllysine; alternate). K321 carries the N6-succinyllysine; alternate modification.

Belongs to the HIBADH-related family. 3-hydroxyisobutyrate dehydrogenase subfamily. In terms of assembly, homodimer. In terms of tissue distribution, detected in skin fibroblasts.

It localises to the mitochondrion. The catalysed reaction is 3-hydroxy-2-methylpropanoate + NAD(+) = 2-methyl-3-oxopropanoate + NADH + H(+). It participates in amino-acid degradation; L-valine degradation. The chain is 3-hydroxyisobutyrate dehydrogenase, mitochondrial (HIBADH) from Homo sapiens (Human).